We begin with the raw amino-acid sequence, 150 residues long: UPF0756 membrane protein STH2648 (150 aa).

The next 4 membrane-spanning stretches (helical) occupy residues 13–33, 52–72, 85–105, and 111–131; these read ALGVVARNALIVTAAGVVLIL, AGLIFLLIAVLVPFATGEVGW, LAAILGGIIAAVLSGYGVTLL, and VIVGMVVGTILGVVLFKGIPV.

Belongs to the UPF0756 family.

The protein localises to the cell membrane. The polypeptide is UPF0756 membrane protein STH2648 (Symbiobacterium thermophilum (strain DSM 24528 / JCM 14929 / IAM 14863 / T)).